Reading from the N-terminus, the 275-residue chain is Release factor glutamine methyltransferase (275 aa).

Residues 114-118 (GTGSG), Asp137, Trp165, and Asn180 contribute to the S-adenosyl-L-methionine site. Substrate is bound at residue 180–183 (NPPY).

This sequence belongs to the protein N5-glutamine methyltransferase family. PrmC subfamily.

It catalyses the reaction L-glutaminyl-[peptide chain release factor] + S-adenosyl-L-methionine = N(5)-methyl-L-glutaminyl-[peptide chain release factor] + S-adenosyl-L-homocysteine + H(+). Functionally, methylates the class 1 translation termination release factors RF1/PrfA and RF2/PrfB on the glutamine residue of the universally conserved GGQ motif. This Xylella fastidiosa (strain Temecula1 / ATCC 700964) protein is Release factor glutamine methyltransferase.